The primary structure comprises 129 residues: Protein BUNDLE SHEATH DEFECTIVE 2, chloroplastic (129 aa).

Residues 1-43 (MAATASLTTTAPSPPALLKASAPLLISFRPVSRHCKNLCIKTK) constitute a chloroplast transit peptide. The CR-type zinc finger occupies 49 to 123 (QSAKKHQKVK…AGFLGGFLST (75 aa)). Residues C62, C65, N68, C73, C76, C97, C100, E105, C108, and C111 each contribute to the Zn(2+) site.

Belongs to the BSD2 chaperone family. As to quaternary structure, interacts with the RuBisCo large subunit (RbcL) assembled as an intermediate complex made of eight RbcL and eight BSD2 subunits. As to expression, expressed in shoot tissues, in both bundle sheath and mesophyll cells.

It localises to the plastid. The protein localises to the chloroplast stroma. Functionally, chloroplast chaperone required for RuBisCo complex biogenesis and translational regulation of the RuBisCo large subunit (RbcL). Stabilizes an end-state assembly intermediate of eight RbcL subunits until the small subunits (RBCSs) become available to produce a complete stable RuBisCo complex containing eight small and eight large subunits. Involved in the differentiation of bundle sheath cells, especially chloroplast structure. This Zea mays (Maize) protein is Protein BUNDLE SHEATH DEFECTIVE 2, chloroplastic.